Reading from the N-terminus, the 141-residue chain is Cholinesterase (141 aa).

A glycan (N-linked (GlcNAc...) asparagine) is linked at N39. 49–50 provides a ligand contact to substrate; that stretch reads GG. Catalysis depends on S131, which acts as the Acyl-ester intermediate. S131 is subject to Phosphoserine.

This sequence belongs to the type-B carboxylesterase/lipase family. Homotetramer; disulfide-linked. Dimer of dimers. Present in most cells except erythrocytes.

Its subcellular location is the secreted. It carries out the reaction an acylcholine + H2O = a carboxylate + choline + H(+). Its function is as follows. Esterase with broad substrate specificity. Contributes to the inactivation of the neurotransmitter acetylcholine. Can degrade neurotoxic organophosphate esters. The chain is Cholinesterase (BCHE) from Canis lupus familiaris (Dog).